Reading from the N-terminus, the 664-residue chain is MAAVGPPQQQVRMAHRQVWAALEVALRVPCLYIIDAIFNSYPDSSQSRFCIVLQIFLRLLGIFVSSIVLILSQRSLFKFYMYSSAFLLAATSVLVNYYASLHIDFYGAYNTSAFGIELLPRKGPSLWMALIVLQLTFGIGYVTLLQIHSIYSQLIILDLLVPVIGLITELPLHIRETLVFTSSLILTLNTVLVLAVKLKWFYYSTRYVYLLVRHMYRIYGLQLLMEDTWKRIRFPDILRVFWLTRVTAQATVLMYILRMANETDSFFISWDDFWDLICNLIISGCDSTLTVLGMSAVISSVAHYLGLGILAFIGSTEEDDRRLGFVAPVLFFILALQTGLSGLRPEERLIRLSRNMCLLLTAVLHFIHGMTDPVLMSLSASHVSSFRRHFPVLFVSACLFILPVLLSYVLWHHYALNTWLFAATAFCVELCLKVIVSLTVYTLFMIDGYYNVLWEKLDNYVYYVRSTGSIIVFIFGVVMFGNGAYTMMFESGSKIRAFMMCLHAYFNIYLQAKNGWKTFMNRRTAVKKINSLPEIKGSRLQEINDVCAICYHEFTTSARITPCNHYFHALCLRKWLYIQDTCPMCHQKVYIEDDIKDNSNVSNNNGFTPPNETPEEAVREAAAESDRELNEDDSTDCDDDVQRERNGVIQHTGAAAEEFNDDTD.

Ala2 carries the post-translational modification N-acetylalanine. 12 consecutive transmembrane segments (helical) span residues 51-71 (IVLQ…VLIL), 85-105 (AFLL…HIDF), 125-145 (SLWM…VTLL), 154-174 (LIIL…PLHI), 178-198 (LVFT…AVKL), 293-313 (GMSA…LAFI), 323-343 (LGFV…LSGL), 356-376 (MCLL…PVLM), 390-410 (FPVL…SYVL), 420-440 (LFAA…SLTV), 469-489 (SIIV…TMMF), and 495-512 (IRAF…YLQA). Residues 547-586 (CAICYHEFTTSARITPCNHYFHALCLRKWLYIQDTCPMCH) form an RING-type; atypical zinc finger. Residues 599–610 (SNVSNNNGFTPP) show a composition bias toward polar residues. The interval 599–664 (SNVSNNNGFT…AAEEFNDDTD (66 aa)) is disordered. Residues 616–628 (EAVREAAAESDRE) show a composition bias toward basic and acidic residues. Residues 629–639 (LNEDDSTDCDD) show a composition bias toward acidic residues. Phosphoserine is present on Ser634. Residues Thr635 and Thr663 each carry the phosphothreonine modification.

As to quaternary structure, interacts with VHL. Interacts with MHC class I and HM13. Component of SCAP-SREBP complex composed of SREBF2, SCAP and RNF139; the complex hampers the interaction between SCAP and SEC24B, thereby reducing SREBF2 proteolytic processing. Interacts with SREBF2 (via C-terminal domain). Interacts with SCAP; the interaction inhibits the interaction of SCAP with SEC24B and hampering the ER to Golgi transport of the SCAP-SREBP complex. Interacts with SEC24B. Interacts with INSIG1 and INSIG2. Interacts with EIF3F and EIF3H; the interaction leads to protein translation inhibitions in a ubiquitination-dependent manner. Interacts with XBP1; the interaction induces ubiquitination and degradation of XBP1. Interacts with AUP1, AMFR and UBE2G2; interaction with AUP1 facilitates interaction of RNF139 with ubiquitin-conjugating enzyme UBE2G2 and ubiquitin ligase AMFR/gp78, leading to sterol-induced ubiquitination of HMGCR and its subsequent proteasomal degradation. In terms of processing, autoubiquitinated. Ubiquitination is induced by sterol and leads to ist degradation via the ubiquitin-proteasome pathway.

It is found in the endoplasmic reticulum membrane. The enzyme catalyses S-ubiquitinyl-[E2 ubiquitin-conjugating enzyme]-L-cysteine + [acceptor protein]-L-lysine = [E2 ubiquitin-conjugating enzyme]-L-cysteine + N(6)-ubiquitinyl-[acceptor protein]-L-lysine.. It participates in protein modification; protein ubiquitination. In terms of biological role, E3-ubiquitin ligase; acts as a negative regulator of cell proliferation through mechanisms involving G2/M arrest and cell death. Required for MHC class I ubiquitination in cells expressing the cytomegalovirus protein US2 before dislocation from the endoplasmic reticulum (ER). Affects SREBP processing by hindering the SREBP-SCAP complex translocation from the ER to the Golgi, thereby reducing SREBF2 target gene expression. Involved in the sterol-accelerated degradation of HMGCR. This is achieved through binding to INSIG1 and/or INSIG2 at the ER membrane. In addition, interaction of RNF139 with AUP1 facilitates interaction of RNF139 with ubiquitin-conjugating enzyme UBE2G2 and ubiquitin ligase AMFR, leading to ubiquitination of HMGCR. The ubiquitinated HMGCR is then released from the ER by the complex into the cytosol for subsequent destruction. Required for INSIG1 ubiquitination. May be required for EIF3 complex ubiquitination. The protein is E3 ubiquitin-protein ligase RNF139 (RNF139) of Pongo abelii (Sumatran orangutan).